The sequence spans 291 residues: Putative carboxymethylenebutenolidase (291 aa).

The first 40 residues, Met-1–Ala-40, serve as a signal peptide directing secretion. Residues Cys-170, Asp-227, and His-259 contribute to the active site.

It belongs to the dienelactone hydrolase family.

It catalyses the reaction 2-(5-oxo-2,5-dihydrofuran-2-ylidene)acetate + H2O = 4-oxohex-2-enedioate + H(+). This is Putative carboxymethylenebutenolidase from Methylorubrum extorquens (strain ATCC 14718 / DSM 1338 / JCM 2805 / NCIMB 9133 / AM1) (Methylobacterium extorquens).